A 244-amino-acid polypeptide reads, in one-letter code: MSKLDLNALNELPKVDRILALAETNAELEKLDAEGRVAWALDNLPGEYVLSSSFGIQAAVSLHLVNQIHPDIPVILTDTGYLFPETYRFIDELTDKLKLNLKVYRATESAAWQEARYGKLWEQGVEGIEKYNDINKVEPMNRALKELNAQTWFAGLRREQSGSRANLPVLAIQRGVFKVLPIIDWDNRTIYQYLQKHGLKYHPLWDEGYLSVGDTHTTRKWEPGMAEEETRFFGLKRECGLHEG.

Catalysis depends on Cys239, which acts as the Nucleophile; cysteine thiosulfonate intermediate.

The protein belongs to the PAPS reductase family. CysH subfamily.

It localises to the cytoplasm. It catalyses the reaction [thioredoxin]-disulfide + sulfite + adenosine 3',5'-bisphosphate + 2 H(+) = [thioredoxin]-dithiol + 3'-phosphoadenylyl sulfate. It participates in sulfur metabolism; hydrogen sulfide biosynthesis; sulfite from sulfate: step 3/3. Its function is as follows. Catalyzes the formation of sulfite from phosphoadenosine 5'-phosphosulfate (PAPS) using thioredoxin as an electron donor. The polypeptide is Phosphoadenosine 5'-phosphosulfate reductase (Shigella flexneri).